The chain runs to 361 residues: Ribosomal RNA large subunit methyltransferase M (361 aa).

S-adenosyl-L-methionine is bound by residues Ser-187, 220-223 (CPGG), Asp-239, Asp-259, and Asp-276. Lys-305 (proton acceptor) is an active-site residue.

The protein belongs to the class I-like SAM-binding methyltransferase superfamily. RNA methyltransferase RlmE family. RlmM subfamily. Monomer.

The protein resides in the cytoplasm. The catalysed reaction is cytidine(2498) in 23S rRNA + S-adenosyl-L-methionine = 2'-O-methylcytidine(2498) in 23S rRNA + S-adenosyl-L-homocysteine + H(+). Its function is as follows. Catalyzes the 2'-O-methylation at nucleotide C2498 in 23S rRNA. This chain is Ribosomal RNA large subunit methyltransferase M, found in Shewanella sp. (strain MR-4).